Consider the following 620-residue polypeptide: 1-deoxy-D-xylulose-5-phosphate synthase (620 aa).

Thiamine diphosphate is bound by residues H80 and G121–S123. Mg(2+) is bound at residue D152. Residues G153–A154, N181, Y288, and E370 each bind thiamine diphosphate. A Mg(2+)-binding site is contributed by N181.

This sequence belongs to the transketolase family. DXPS subfamily. Homodimer. Mg(2+) is required as a cofactor. Requires thiamine diphosphate as cofactor.

It catalyses the reaction D-glyceraldehyde 3-phosphate + pyruvate + H(+) = 1-deoxy-D-xylulose 5-phosphate + CO2. The protein operates within metabolic intermediate biosynthesis; 1-deoxy-D-xylulose 5-phosphate biosynthesis; 1-deoxy-D-xylulose 5-phosphate from D-glyceraldehyde 3-phosphate and pyruvate: step 1/1. In terms of biological role, catalyzes the acyloin condensation reaction between C atoms 2 and 3 of pyruvate and glyceraldehyde 3-phosphate to yield 1-deoxy-D-xylulose-5-phosphate (DXP). This is 1-deoxy-D-xylulose-5-phosphate synthase from Escherichia coli O157:H7.